A 222-amino-acid polypeptide reads, in one-letter code: MKKKQQSSAKFAVILTVVVVVLLAAIVIINNKTEQGNDAVSGQPSIKGQPVLGKDDAPVTVVEFGDYKCPSCKVFNSDIFPKIQKDFIDKGDVKFSFVNVMFHGKGSRLAALASEEVWKEDPDSFWDFHEKLFEKQPDTEQEWVTPGLLGDLAKSTTKIKPETLKENLDKETFASQVEKDSDLNQKMNIQATPTIYVNDKVIKNFADYDEIKETIEKELKGK.

The N-terminal stretch at M1–G36 is a signal peptide. One can recognise a Thioredoxin domain in the interval N37–K220. An intrachain disulfide couples C69 to C72.

The protein belongs to the thioredoxin family. DsbA subfamily.

Its subcellular location is the cell membrane. It localises to the membrane raft. In terms of biological role, required for the stabilization, possibly via formation of a disulfide bond, of the obligatory competence protein ComGC. May be required for the stability of secreted proteins with disulfide bonds. Not required for sporulation. This Bacillus subtilis (strain 168) protein is Disulfide bond formation protein D (bdbD).